Reading from the N-terminus, the 288-residue chain is Light-independent protochlorophyllide reductase iron-sulfur ATP-binding protein (288 aa).

Residues 10 to 15 (GIGKST) and K39 each bind ATP. S14 provides a ligand contact to Mg(2+). [4Fe-4S] cluster contacts are provided by C95 and C129. An ATP-binding site is contributed by 180 to 181 (NR).

The protein belongs to the NifH/BchL/ChlL family. In terms of assembly, homodimer. Protochlorophyllide reductase is composed of three subunits; ChlL, ChlN and ChlB. It depends on [4Fe-4S] cluster as a cofactor.

It catalyses the reaction chlorophyllide a + oxidized 2[4Fe-4S]-[ferredoxin] + 2 ADP + 2 phosphate = protochlorophyllide a + reduced 2[4Fe-4S]-[ferredoxin] + 2 ATP + 2 H2O. It functions in the pathway porphyrin-containing compound metabolism; chlorophyll biosynthesis (light-independent). Functionally, component of the dark-operative protochlorophyllide reductase (DPOR) that uses Mg-ATP and reduced ferredoxin to reduce ring D of protochlorophyllide (Pchlide) to form chlorophyllide a (Chlide). This reaction is light-independent. The L component serves as a unique electron donor to the NB-component of the complex, and binds Mg-ATP. The protein is Light-independent protochlorophyllide reductase iron-sulfur ATP-binding protein of Nostoc punctiforme (strain ATCC 29133 / PCC 73102).